We begin with the raw amino-acid sequence, 84 residues long: Sulfur carrier protein TusA (84 aa).

The active-site Cysteine persulfide intermediate is the Cys-19.

It belongs to the sulfur carrier protein TusA family. In terms of assembly, interacts with IscS.

The protein resides in the cytoplasm. It participates in tRNA modification. Sulfur carrier protein involved in sulfur trafficking in the cell. Part of a sulfur-relay system required for 2-thiolation during synthesis of 2-thiouridine of the modified wobble base 5-methylaminomethyl-2-thiouridine (mnm(5)s(2)U) in tRNA. Interacts with IscS and stimulates its cysteine desulfurase activity. Accepts an activated sulfur from IscS, which is then transferred to TusD, and thus determines the direction of sulfur flow from IscS to 2-thiouridine formation. Also appears to be involved in sulfur transfer for the biosynthesis of molybdopterin. The sequence is that of Sulfur carrier protein TusA from Yersinia enterocolitica serotype O:8 / biotype 1B (strain NCTC 13174 / 8081).